The chain runs to 173 residues: Lens fiber membrane intrinsic protein (173 aa).

Residues 1–3 (MYS) are Cytoplasmic-facing. A helical membrane pass occupies residues 4 to 24 (FMGGGLFCAWVGTILLVVAMA). Residues 25–66 (TDHWMQYRLSGSFAHQGLWRYCLGNKCYLQTDSIAYWNATRA) are Extracellular-facing. 2 C-linked (Man) tryptophan glycosylation sites follow: W43 and W61. The N-linked (GlcNAc...) asparagine glycan is linked to N62. A helical membrane pass occupies residues 67–87 (FMILSALCAISGIIMGIMAFA). Topologically, residues 88–98 (HQPTFSRISRP) are cytoplasmic. A helical membrane pass occupies residues 99–119 (FSAGIMFFSSTLFVVLALAIY). Topologically, residues 120-140 (TGVTVSFLGRRFGDWRFSWSY) are extracellular. A helical membrane pass occupies residues 141–161 (ILGWVAVLMTFFAGIFYMCAY). Residues 162–173 (RVHECRRLSTPR) are Cytoplasmic-facing. Residue S170 is modified to Phosphoserine. T171 is modified (phosphothreonine).

It belongs to the PMP-22/EMP/MP20 family. As to quaternary structure, seems to be associated with itself or another lens membrane component via disulfide bonds. In terms of tissue distribution, eye lens specific.

It is found in the membrane. Present in the thicker 16-17 nm junctions of mammalian lens fiber cells, where it may contribute to cell junctional organization. Acts as a receptor for calmodulin. May play an important role in both lens development and cataractogenesis. The protein is Lens fiber membrane intrinsic protein (LIM2) of Homo sapiens (Human).